Here is a 335-residue protein sequence, read N- to C-terminus: Ornithine carbamoyltransferase 2, catabolic (335 aa).

Carbamoyl phosphate is bound by residues 62–65 (STRT), Gln-89, Arg-113, and 140–143 (HPTQ). Residues Asn-172, Asp-236, and 240 to 241 (SM) each bind L-ornithine. Carbamoyl phosphate-binding positions include 277 to 278 (CL) and Arg-322.

Belongs to the aspartate/ornithine carbamoyltransferase superfamily. OTCase family.

Its subcellular location is the cytoplasm. The catalysed reaction is carbamoyl phosphate + L-ornithine = L-citrulline + phosphate + H(+). Its pathway is amino-acid degradation; L-arginine degradation via ADI pathway; carbamoyl phosphate from L-arginine: step 2/2. Functionally, reversibly catalyzes the transfer of the carbamoyl group from carbamoyl phosphate (CP) to the N(epsilon) atom of ornithine (ORN) to produce L-citrulline. The polypeptide is Ornithine carbamoyltransferase 2, catabolic (arcB2) (Staphylococcus epidermidis (strain ATCC 12228 / FDA PCI 1200)).